We begin with the raw amino-acid sequence, 212 residues long: MATAPYGVRLLVGAATVAVEETMKLPRTILMYPMTLASQAAHVVMRFQQGLAELVIKGDNTLETLFPPKDEKPEWATFDEDLPDALEGTSIPLLGLSDASEAKNDDRRSDGRFALYSVSDTPETTTASRSADRSTNPKTAKHPKSAAKPTVPTPAVAAELDYPALTLAQLRARLHTLDVPELEALLAYEQATKARAPFQTLLANRITRATAK.

Residues 97 to 151 are disordered; sequence SDASEAKNDDRRSDGRFALYSVSDTPETTTASRSADRSTNPKTAKHPKSAAKPTV. Over residues 100 to 111 the composition is skewed to basic and acidic residues; it reads SEAKNDDRRSDG.

This is an uncharacterized protein from Mycobacterium tuberculosis (strain CDC 1551 / Oshkosh).